We begin with the raw amino-acid sequence, 807 residues long: Glycerol-3-phosphate acyltransferase (807 aa).

Positions 305 to 310 (CHRSHM) match the HXXXXD motif motif.

The protein belongs to the GPAT/DAPAT family.

The protein resides in the cell inner membrane. The enzyme catalyses sn-glycerol 3-phosphate + an acyl-CoA = a 1-acyl-sn-glycero-3-phosphate + CoA. The protein operates within phospholipid metabolism; CDP-diacylglycerol biosynthesis; CDP-diacylglycerol from sn-glycerol 3-phosphate: step 1/3. The protein is Glycerol-3-phosphate acyltransferase of Aliivibrio salmonicida (strain LFI1238) (Vibrio salmonicida (strain LFI1238)).